A 100-amino-acid chain; its full sequence is Large ribosomal subunit protein uL23 (100 aa).

Belongs to the universal ribosomal protein uL23 family. Part of the 50S ribosomal subunit. Contacts protein L29, and trigger factor when it is bound to the ribosome.

Functionally, one of the early assembly proteins it binds 23S rRNA. One of the proteins that surrounds the polypeptide exit tunnel on the outside of the ribosome. Forms the main docking site for trigger factor binding to the ribosome. This chain is Large ribosomal subunit protein uL23, found in Idiomarina loihiensis (strain ATCC BAA-735 / DSM 15497 / L2-TR).